The following is a 225-amino-acid chain: Uracil-DNA glycosylase (225 aa).

Catalysis depends on D65, which acts as the Proton acceptor.

This sequence belongs to the uracil-DNA glycosylase (UDG) superfamily. UNG family.

Its subcellular location is the cytoplasm. It carries out the reaction Hydrolyzes single-stranded DNA or mismatched double-stranded DNA and polynucleotides, releasing free uracil.. In terms of biological role, excises uracil residues from the DNA which can arise as a result of misincorporation of dUMP residues by DNA polymerase or due to deamination of cytosine. This Bacillus cereus (strain AH820) protein is Uracil-DNA glycosylase.